Consider the following 372-residue polypeptide: Queuine tRNA-ribosyltransferase (372 aa).

Catalysis depends on aspartate 89, which acts as the Proton acceptor. Substrate is bound by residues 89–93 (DSGGF), aspartate 161, and glycine 232. Positions 262 to 268 (GIGDLPS) are RNA binding. Aspartate 281 acts as the Nucleophile in catalysis. Residues 286–290 (TKAAR) form an RNA binding; important for wobble base 34 recognition region. Residues cysteine 319, cysteine 321, cysteine 324, and histidine 351 each coordinate Zn(2+).

It belongs to the queuine tRNA-ribosyltransferase family. Homodimer. Within each dimer, one monomer is responsible for RNA recognition and catalysis, while the other monomer binds to the replacement base PreQ1. Requires Zn(2+) as cofactor.

It catalyses the reaction 7-aminomethyl-7-carbaguanine + guanosine(34) in tRNA = 7-aminomethyl-7-carbaguanosine(34) in tRNA + guanine. It participates in tRNA modification; tRNA-queuosine biosynthesis. In terms of biological role, catalyzes the base-exchange of a guanine (G) residue with the queuine precursor 7-aminomethyl-7-deazaguanine (PreQ1) at position 34 (anticodon wobble position) in tRNAs with GU(N) anticodons (tRNA-Asp, -Asn, -His and -Tyr). Catalysis occurs through a double-displacement mechanism. The nucleophile active site attacks the C1' of nucleotide 34 to detach the guanine base from the RNA, forming a covalent enzyme-RNA intermediate. The proton acceptor active site deprotonates the incoming PreQ1, allowing a nucleophilic attack on the C1' of the ribose to form the product. After dissociation, two additional enzymatic reactions on the tRNA convert PreQ1 to queuine (Q), resulting in the hypermodified nucleoside queuosine (7-(((4,5-cis-dihydroxy-2-cyclopenten-1-yl)amino)methyl)-7-deazaguanosine). The sequence is that of Queuine tRNA-ribosyltransferase from Chlamydia trachomatis serovar L2 (strain ATCC VR-902B / DSM 19102 / 434/Bu).